The following is an 89-amino-acid chain: Small ribosomal subunit protein uS15 (89 aa).

It belongs to the universal ribosomal protein uS15 family. As to quaternary structure, part of the 30S ribosomal subunit. Forms a bridge to the 50S subunit in the 70S ribosome, contacting the 23S rRNA.

In terms of biological role, one of the primary rRNA binding proteins, it binds directly to 16S rRNA where it helps nucleate assembly of the platform of the 30S subunit by binding and bridging several RNA helices of the 16S rRNA. Its function is as follows. Forms an intersubunit bridge (bridge B4) with the 23S rRNA of the 50S subunit in the ribosome. The polypeptide is Small ribosomal subunit protein uS15 (Heliobacterium modesticaldum (strain ATCC 51547 / Ice1)).